Here is a 757-residue protein sequence, read N- to C-terminus: UDP-N-acetylmuramoyl-L-alanyl-D-glutamate--2,6-diaminopimelate ligase MurE homolog, chloroplastic (757 aa).

Low complexity predominate over residues 1 to 11 (MATAPLAFHLP). The N-terminal 53 residues, 1-53 (MATAPLAFHLPFPFPSASRPPPRLLPPSRRPPAARLAATRRFRPPTADDEPPE), are a transit peptide targeting the chloroplast. Disordered stretches follow at residues 1-112 (MATA…DEFF), 126-152 (FTRR…ADEL), and 172-195 (VSLA…GDDG). Residues 12–30 (FPFPSASRPPPRLLPPSRR) are compositionally biased toward pro residues. Composition is skewed to acidic residues over residues 47 to 56 (ADDEPPEAAE) and 142 to 152 (PEEEDGLADEL).

Belongs to the MurCDEF family. MurE subfamily. In terms of assembly, component of the plastid-encoded plastid RNA polymerase (PEP) complex.

It localises to the plastid. Its subcellular location is the chloroplast. In terms of biological role, required for the activity of the plastid-encoded RNA polymerase (PEP) and full expression of genes transcribed by PEP. In Oryza sativa subsp. japonica (Rice), this protein is UDP-N-acetylmuramoyl-L-alanyl-D-glutamate--2,6-diaminopimelate ligase MurE homolog, chloroplastic.